A 306-amino-acid chain; its full sequence is D-alanine--D-alanine ligase (306 aa).

Positions K101–E303 constitute an ATP-grasp domain. Residue F134–T189 participates in ATP binding. Positions 257, 270, and 272 each coordinate Mg(2+).

Belongs to the D-alanine--D-alanine ligase family. Mg(2+) serves as cofactor. Requires Mn(2+) as cofactor.

Its subcellular location is the cytoplasm. It catalyses the reaction 2 D-alanine + ATP = D-alanyl-D-alanine + ADP + phosphate + H(+). The protein operates within cell wall biogenesis; peptidoglycan biosynthesis. Cell wall formation. The polypeptide is D-alanine--D-alanine ligase (Pectobacterium carotovorum subsp. carotovorum (strain PC1)).